A 691-amino-acid polypeptide reads, in one-letter code: NADH-ubiquinone oxidoreductase 75 kDa subunit (691 aa).

A 2Fe-2S ferredoxin-type domain is found at 1-78 (MVNVFVDGLS…NMKIFTNTPL (78 aa)). [2Fe-2S] cluster-binding residues include Cys34, Cys45, Cys48, and Cys62. The region spanning 78–117 (LVKKAREGVLEFLLVNHPLDCPICDQGGECDLQDLTMVYG) is the 4Fe-4S His(Cys)3-ligated-type domain. Residues His94, Cys98, Cys101, Cys107, Cys146, Cys149, Cys152, and Cys196 each contribute to the [4Fe-4S] cluster site. The region spanning 215–271 (LQSTESIDVSDAIGSNIRIDVRGSEIMRILPRLNEDVNEEWISDKARFCYDGLKRQR) is the 4Fe-4S Mo/W bis-MGD-type domain.

Belongs to the complex I 75 kDa subunit family. In terms of assembly, complex I is composed of about 30 different subunits. The cofactor is [2Fe-2S] cluster. [4Fe-4S] cluster is required as a cofactor.

It localises to the mitochondrion inner membrane. The enzyme catalyses a ubiquinone + NADH + 5 H(+)(in) = a ubiquinol + NAD(+) + 4 H(+)(out). Functionally, core subunit of the mitochondrial membrane respiratory chain NADH dehydrogenase (Complex I) that is believed to belong to the minimal assembly required for catalysis. Complex I functions in the transfer of electrons from NADH to the respiratory chain. The immediate electron acceptor for the enzyme is believed to be ubiquinone. This is the largest subunit of complex I and it is a component of the iron-sulfur (IP) fragment of the enzyme. It may form part of the active site crevice where NADH is oxidized. This chain is NADH-ubiquinone oxidoreductase 75 kDa subunit (NAD11), found in Reclinomonas americana.